Consider the following 305-residue polypeptide: Ribonuclease Z (305 aa).

7 residues coordinate Zn(2+): H61, H63, D65, H66, H138, D208, and H266. D65 serves as the catalytic Proton acceptor.

The protein belongs to the RNase Z family. Homodimer. The cofactor is Zn(2+).

The enzyme catalyses Endonucleolytic cleavage of RNA, removing extra 3' nucleotides from tRNA precursor, generating 3' termini of tRNAs. A 3'-hydroxy group is left at the tRNA terminus and a 5'-phosphoryl group is left at the trailer molecule.. Functionally, zinc phosphodiesterase, which displays some tRNA 3'-processing endonuclease activity. Probably involved in tRNA maturation, by removing a 3'-trailer from precursor tRNA. This chain is Ribonuclease Z, found in Methanosarcina acetivorans (strain ATCC 35395 / DSM 2834 / JCM 12185 / C2A).